A 236-amino-acid chain; its full sequence is WUSCHEL-related homeobox 4 (236 aa).

A DNA-binding region (homeobox; WUS-type) is located at residues 88–152; the sequence is AGTTRWNPSA…NHKARERQKQ (65 aa). Residues 169-188 form a disordered region; that stretch reads PATANETKEAPEKKEKDVED. Positions 174-187 are enriched in basic and acidic residues; it reads ETKEAPEKKEKDVE.

Belongs to the WUS homeobox family.

The protein resides in the nucleus. In terms of biological role, transcription factor which may be involved in developmental processes. The chain is WUSCHEL-related homeobox 4 (WOX4) from Oryza sativa subsp. indica (Rice).